The primary structure comprises 335 residues: NmrA-like family domain-containing oxidoreductase hkm9 (335 aa).

NADP(+)-binding positions include 12–17 (GATGNQ), 38–42 (RNPNS), 59–60 (DG), 80–82 (INS), Lys-137, and 161–164 (YLEN).

Belongs to the NmrA-type oxidoreductase family.

The protein operates within secondary metabolite biosynthesis. Functionally, nmrA-like family domain-containing oxidoreductase; part of the gene cluster that mediates the biosynthesis of hancockiamides, an unusual new family of N-cinnamoylated piperazines. The NRPS hkm10 and the NmrA-like reductase hkm9 are proposed to convert two molecules of L-Phe to the intermediary piperazine called xenocockiamide A. Xenocockiamide A is then converted to hancockiamide D via a series of hydroxylations and O-methylations. The tyrosinase hkm6 may catalyze an aromatic hydroxylation, then the 2-oxoglutarate-dependent Fe(II) dioxygenase hkm4 and the FAD-dependent phenol hydroxylase hkm7 may catalyze consecutive hydroxylations to install 2 more hydroxy groups, and the methyltransferase hkm8 probably catalyzes two methylations using 2 molecules of S-adenosyl-L-methionine (SAM). The NRPS hkm11 activates and transfers trans-cinnamate supplied by the PAL hkm12 to hancockiamide D and produces hancockiamide A. NRPS Hkm11 has the flexibility to tolerate the bulky hancockiamide G as a substrate and the absence of the acetyl-transferase hkm3 opens up the opportunity for hkm11 to introduce a second N-cinnamoyl moiety. The cytochrome P450 monooxygenase hkm5 catalyzes the methylenedioxy bridge formation, converting hancockiamide A into hancockiamide G. Hkm5 can also convert hancockiamide B into hancockiamide C, and hancockiamide D into hancockiamide H. The N-acetyltransferase hkm3 finally transfers an acetyl group to 1-N of piperazine, converting hancockiamide A into hancockiamide B and hancockiamide G into hancockiamide C. In Aspergillus hancockii, this protein is NmrA-like family domain-containing oxidoreductase hkm9.